Here is a 113-residue protein sequence, read N- to C-terminus: Putative pterin-4-alpha-carbinolamine dehydratase (113 aa).

Belongs to the pterin-4-alpha-carbinolamine dehydratase family.

The enzyme catalyses (4aS,6R)-4a-hydroxy-L-erythro-5,6,7,8-tetrahydrobiopterin = (6R)-L-erythro-6,7-dihydrobiopterin + H2O. This Chlorobium limicola (strain DSM 245 / NBRC 103803 / 6330) protein is Putative pterin-4-alpha-carbinolamine dehydratase.